Consider the following 304-residue polypeptide: Elongation factor Ts (304 aa).

The involved in Mg(2+) ion dislocation from EF-Tu stretch occupies residues 79-82 (TDFV).

The protein belongs to the EF-Ts family.

The protein localises to the cytoplasm. Associates with the EF-Tu.GDP complex and induces the exchange of GDP to GTP. It remains bound to the aminoacyl-tRNA.EF-Tu.GTP complex up to the GTP hydrolysis stage on the ribosome. This Polaromonas sp. (strain JS666 / ATCC BAA-500) protein is Elongation factor Ts.